Reading from the N-terminus, the 72-residue chain is SRY-related protein AES2 (72 aa).

The HMG box DNA-binding region spans 1-69 (VKRPMNAFMV…KHMADYPDYK (69 aa)).

It localises to the nucleus. The protein is SRY-related protein AES2 of Alligator mississippiensis (American alligator).